A 212-amino-acid chain; its full sequence is MVFEKIDKNSWNRKEYFDHYFASVPCTYSMTVKVDITQIKEKGMKLYPAMLYYIAMIVNRHSEFRTAINQDGELGIYDEMIPSYTIFHNDTETFSSLWTECKSDFKSFLADYESDTQRYGNNHRMEGKPNAPENIFNVSMIPWSTFDGFNLNLQKGYDYLIPIFTMGKIIKKDNKIILPLAIQVHHAVCDGFHICRFVNELQELIIVTQVCL.

Residue His-186 is the Proton acceptor of the active site.

It belongs to the chloramphenicol acetyltransferase family. Homotrimer.

It carries out the reaction chloramphenicol + acetyl-CoA = chloramphenicol 3-acetate + CoA. This enzyme is an effector of chloramphenicol resistance in bacteria. The protein is Chloramphenicol acetyltransferase (catD) of Clostridioides difficile (Peptoclostridium difficile).